Reading from the N-terminus, the 378-residue chain is Deoxyhypusine synthase (378 aa).

Residues 107-111 (SNLIS), 133-135 (SAG), Glu139, and Asp253 contribute to the NAD(+) site. A spermidine-binding site is contributed by 138–139 (EE). A spermidine-binding site is contributed by Asp258. Gly300 contributes to the NAD(+) binding site. Spermidine is bound at residue His305. 325-326 (TG) lines the NAD(+) pocket. Spermidine is bound by residues 331-333 (GSD) and 340-346 (EAISWGK). The active-site Nucleophile is the Lys346. Residue 359-360 (DA) participates in NAD(+) binding.

The protein belongs to the deoxyhypusine synthase family. It depends on NAD(+) as a cofactor.

The enzyme catalyses [eIF5A protein]-L-lysine + spermidine = [eIF5A protein]-deoxyhypusine + propane-1,3-diamine. Its pathway is protein modification; eIF5A hypusination. In terms of biological role, catalyzes the NAD-dependent oxidative cleavage of spermidine and the subsequent transfer of the butylamine moiety of spermidine to the epsilon-amino group of a specific lysine residue of the eIF-5A precursor protein to form the intermediate deoxyhypusine residue. The protein is Deoxyhypusine synthase (DYS1) of Debaryomyces hansenii (strain ATCC 36239 / CBS 767 / BCRC 21394 / JCM 1990 / NBRC 0083 / IGC 2968) (Yeast).